The chain runs to 327 residues: Glycolipid sulfotransferase BCG_1434 (327 aa).

40 to 45 (KSGLTW) serves as a coordination point for 3'-phosphoadenylyl sulfate. Histidine 97 functions as the Proton acceptor in the catalytic mechanism. Position 116–124 (116–124 (RDPRDAAVS)) interacts with 3'-phosphoadenylyl sulfate.

The protein belongs to the sulfotransferase 1 family.

Functionally, involved in the synthesis of cell wall sulfolipids. This chain is Glycolipid sulfotransferase BCG_1434, found in Mycobacterium bovis (strain BCG / Pasteur 1173P2).